The sequence spans 532 residues: Probable cytochrome c oxidase subunit 1 (532 aa).

The next 8 membrane-spanning stretches (helical) occupy residues 33-53 (IMYI…SLLF), 74-94 (VLIT…ALFG), 95-115 (GFGN…FPRL), 118-138 (ISFW…FVDG), 163-183 (MAIF…INLI), 200-220 (PLFV…MPVL), 252-272 (LFWF…FGIV), and 284-304 (IFGY…GFIV). H79 is a binding site for Fe(II)-heme a. Residues H258 and Y262 each contribute to the Cu cation site. Positions 307 and 308 each coordinate Cu cation. 2 helical membrane-spanning segments follow: residues 318 to 338 (ALIY…IKIF) and 355 to 375 (MLFS…GIIL). H393 lines the heme a3 pocket. A run of 3 helical transmembrane segments spans residues 394–414 (FHYT…YYWF), 431–451 (FWIT…LGLA), and 473–493 (IGAG…FYTL). H395 serves as a coordination point for Fe(II)-heme a.

The protein belongs to the heme-copper respiratory oxidase family.

It localises to the cell membrane. The enzyme catalyses 4 Fe(II)-[cytochrome c] + O2 + 8 H(+)(in) = 4 Fe(III)-[cytochrome c] + 2 H2O + 4 H(+)(out). It functions in the pathway energy metabolism; oxidative phosphorylation. Cytochrome c oxidase is the component of the respiratory chain that catalyzes the reduction of oxygen to water. Subunits 1-3 form the functional core of the enzyme complex. CO I is the catalytic subunit of the enzyme. Electrons originating in cytochrome c are transferred via the copper A center of subunit 2 and heme A of subunit 1 to the bimetallic center formed by heme A3 and copper B. In Rickettsia conorii (strain ATCC VR-613 / Malish 7), this protein is Probable cytochrome c oxidase subunit 1 (ctaD).